The sequence spans 543 residues: Excitatory amino acid transporter 1 (543 aa).

The Cytoplasmic segment spans residues 1-47; it reads MTKSNGEEPRMGSRMERFQQGVRKRTLLAKKKVQNITKEDVKSYLFR. Residues 48 to 68 traverse the membrane as a helical segment; it reads NAFVLLTVSAVIVGTILGFAL. The Extracellular portion of the chain corresponds to 69-86; that stretch reads RPYKMSYREVKYFSFPGE. The chain crosses the membrane as a helical span at residues 87-108; sequence LLMRMLQMLVLPLIISSLVTGM. At 109–122 the chain is on the cytoplasmic side; sequence AALDSKASGKMGMR. A helical membrane pass occupies residues 123-145; the sequence is AVVYYMTTTIIAVVIGIIIVIII. Residues 146–236 lie on the Extracellular side of the membrane; that stretch reads HPGKGTKENM…IREEMVPVPG (91 aa). The helical transmembrane segment at 237-260 threads the bilayer; sequence SVNGVNALGLVVFSMCFGFVIGNM. Topologically, residues 261-269 are cytoplasmic; it reads KEQGQALRE. The helical transmembrane segment at 270–297 threads the bilayer; sequence FFDSLNEAIMRLVAVIMWYAPLGILFLI. The Extracellular portion of the chain corresponds to 298–318; sequence AGKILEMEDMGVIGGQLAMYT. The helical transmembrane segment at 319-340 threads the bilayer; that stretch reads VTVIVGLLIHAVIVLPLLYFLV. Residues 341–345 are Cytoplasmic-facing; that stretch reads TRKNP. The discontinuously helical intramembrane region spans 346–376; that stretch reads WVFIGGLLQALITALGTSSSSATLPITFKCL. Position 363–365 (363–365) interacts with L-aspartate; sequence SSS. The Cytoplasmic segment spans residues 377–385; the sequence is EENNGVDKR. A helical membrane pass occupies residues 386–412; sequence ITRFVLPVGATINMDGTALYEALAAIF. Na(+) contacts are provided by Gly394, Thr396, and Asn398. Thr402 contributes to the L-aspartate binding site. At 413–425 the chain is on the extracellular side; the sequence is IAQVNNFDLNFGQ. The segment at residues 426–459 is an intramembrane region (discontinuously helical); that stretch reads IITISITATAASIGAAGIPQAGLVTMVIVLTSVG. An L-aspartate-binding site is contributed by 443 to 447; sequence IPQAG. At 460–472 the chain is on the extracellular side; that stretch reads LPTDDITLIIAVD. Residues 473–494 form a helical membrane-spanning segment; sequence WFLDRLRTTTNVLGDSLGAGIV. Asp476 and Asn483 together coordinate L-aspartate. Residues Asn483 and Asp487 each contribute to the Na(+) site. The Cytoplasmic portion of the chain corresponds to 495–543; sequence EHLSRHELKNRDVEMGNSVIEENEMKKPYQLIAQDNEPEKPVADSETKM. The residue at position 512 (Ser512) is a Phosphoserine. Positions 522–543 are disordered; it reads PYQLIAQDNEPEKPVADSETKM. The span at 531 to 543 shows a compositional bias: basic and acidic residues; it reads EPEKPVADSETKM.

Belongs to the dicarboxylate/amino acid:cation symporter (DAACS) (TC 2.A.23) family. SLC1A3 subfamily. In terms of assembly, homotrimer. Post-translationally, glycosylated. As to expression, detected in brain and cerebellum. Both isoform GLAST-1 and GLAST-1A are expressed in bone and brain. In brain isoform GLAST-1 is highly enriched in the Purkinje cell layer in cerebellum.

The protein resides in the cell membrane. It carries out the reaction K(+)(in) + L-glutamate(out) + 3 Na(+)(out) + H(+)(out) = K(+)(out) + L-glutamate(in) + 3 Na(+)(in) + H(+)(in). The enzyme catalyses K(+)(in) + L-aspartate(out) + 3 Na(+)(out) + H(+)(out) = K(+)(out) + L-aspartate(in) + 3 Na(+)(in) + H(+)(in). It catalyses the reaction D-aspartate(out) + K(+)(in) + 3 Na(+)(out) + H(+)(out) = D-aspartate(in) + K(+)(out) + 3 Na(+)(in) + H(+)(in). Functionally, sodium-dependent, high-affinity amino acid transporter that mediates the uptake of L-glutamate and also L-aspartate and D-aspartate. Functions as a symporter that transports one amino acid molecule together with two or three Na(+) ions and one proton, in parallel with the counter-transport of one K(+) ion. Plays a redundant role in the rapid removal of released glutamate from the synaptic cleft, which is essential for terminating the postsynaptic action of glutamate. The sequence is that of Excitatory amino acid transporter 1 (Slc1a3) from Rattus norvegicus (Rat).